A 482-amino-acid chain; its full sequence is MKSSFGKKEGEYSRLVSKSSNKLLNSLWEKKQIPEEGWTEHTLDLFLSWLSSHDTNNRVDMIPVGAGEREGRVLTPLVQRLHSNLTHGIGRSGNLLEIQPKALGSSMLACLSNEFAKHALHLLGLQTVKSCIVVPLCTGMSLSLCMTSWRRRRPKAKYVIWLRIDQKSSLKSIYHAGFEAIIVEPTRDHDALVTDVETVNRIVEQRGEELLCVMTTTSCFAPRSPDNIEAISAICAAHDVPHLVNNAYGLQSEETIRKIAAAHECGRVDAVVQSLDKNFQVPVGGALIAGFKQSHIQSIAQAYPGRASSVPSRDLVLTFLYQGQSAFLEPFQKQKQMFLKMRRKLTSFAENVGECVYDVPENEISLAMTLSTIPPTKQTLFGSVLFSRGITGARVVQSSQSKTTIEGCEFVNFGSHTAEQHGGYLNIACSIGMADHELEELFTRLTSSYAKFIRQLAKEDDRRGGSSGRRVPMNESFDMEND.

Residues 1–36 are tetramerization; it reads MKSSFGKKEGEYSRLVSKSSNKLLNSLWEKKQIPEE. Residue Arg-69 coordinates pyridoxal 5'-phosphate. Residues 90–100 are phosphate loop (P-loop); sequence GRSGNLLEIQP. 3 residues coordinate substrate: Arg-91, Ser-92, and Gln-99. Residue Lys-277 is modified to N6-(pyridoxal phosphate)lysine. Arg-306 serves as a coordination point for substrate. Arg-388 provides a ligand contact to tRNA. Positions 461-482 are disordered; it reads DRRGGSSGRRVPMNESFDMEND.

Belongs to the SepSecS family. As to quaternary structure, homotetramer formed by a catalytic dimer and a non-catalytic dimer serving as a binding platform that orients tRNASec for catalysis. Each tetramer binds the CCA ends of two tRNAs which point to the active sites of the catalytic dimer. The cofactor is pyridoxal 5'-phosphate.

It localises to the cytoplasm. The enzyme catalyses O-phospho-L-seryl-tRNA(Sec) + selenophosphate + H2O = L-selenocysteinyl-tRNA(Sec) + 2 phosphate. It participates in aminoacyl-tRNA biosynthesis; selenocysteinyl-tRNA(Sec) biosynthesis; selenocysteinyl-tRNA(Sec) from L-seryl-tRNA(Sec) (archaeal/eukaryal route): step 2/2. Functionally, converts O-phosphoseryl-tRNA(Sec) to selenocysteinyl-tRNA(Sec) required for selenoprotein biosynthesis. In Caenorhabditis briggsae, this protein is O-phosphoseryl-tRNA(Sec) selenium transferase (secs-1).